The following is a 336-amino-acid chain: Vacuolar protein sorting-associated protein 26B (336 aa).

A phosphoserine mark is found at S302, S304, and S319.

The protein belongs to the VPS26 family. Component of the heterotrimeric retromer cargo-selective complex (CSC), also described as vacuolar protein sorting subcomplex (VPS), formed by VPS26 (VPS26A or VPS26B), VPS29 and VPS35. The CSC has a highly elongated structure with VPS26 and VPS29 binding independently at opposite distal ends of VPS35 as central platform. The CSC is believed to associate with variable sorting nexins to form functionally distinct retromer complex variants. The originally described SNX-BAR retromer is a pentamer containing the CSC and a heterodimeric membrane-deforming subcomplex formed between SNX1 or SNX2 and SNX5 or SNX6 (also called SNX-BAR subcomplex); the respective CSC and SNX-BAR subcomplexes associate with low affinity. The CSC associates with SNX3 to form a SNX3-retromer complex. The CSC associates with SNX27, the WASH complex and the SNX-BAR subcomplex to form the SNX27-retromer complex. Interacts with VPS29, VPS35, TBC1D5, GOLPH3, SNX27. As to expression, ubiquitously expressed in developing embryo and adult. Highly expressed in brain.

It localises to the cytoplasm. Its subcellular location is the membrane. It is found in the early endosome. The protein resides in the late endosome. In terms of biological role, acts as a component of the retromer cargo-selective complex (CSC). The CSC is believed to be the core functional component of retromer or respective retromer complex variants acting to prevent missorting of selected transmembrane cargo proteins into the lysosomal degradation pathway. The recruitment of the CSC to the endosomal membrane involves RAB7A and SNX3. The SNX-BAR retromer mediates retrograde transport of cargo proteins from endosomes to the trans-Golgi network (TGN) and is involved in endosome-to-plasma membrane transport for cargo protein recycling. The SNX3-retromer mediates the retrograde transport of WLS distinct from the SNX-BAR retromer pathway. The SNX27-retromer is believed to be involved in endosome-to-plasma membrane trafficking and recycling of a broad spectrum of cargo proteins. The CSC seems to act as recruitment hub for other proteins, such as the WASH complex and TBC1D5. May be involved in retrograde transport of SORT1 but not of IGF2R. Acts redundantly with VSP26A in SNX-27 mediated endocytic recycling of SLC2A1/GLUT1. The protein is Vacuolar protein sorting-associated protein 26B (Vps26b) of Mus musculus (Mouse).